Reading from the N-terminus, the 236-residue chain is 2,3,4,5-tetrahydropyridine-2,6-dicarboxylate N-acetyltransferase (236 aa).

Belongs to the transferase hexapeptide repeat family. DapH subfamily.

The catalysed reaction is (S)-2,3,4,5-tetrahydrodipicolinate + acetyl-CoA + H2O = L-2-acetamido-6-oxoheptanedioate + CoA. It participates in amino-acid biosynthesis; L-lysine biosynthesis via DAP pathway; LL-2,6-diaminopimelate from (S)-tetrahydrodipicolinate (acetylase route): step 1/3. In terms of biological role, catalyzes the transfer of an acetyl group from acetyl-CoA to tetrahydrodipicolinate. This chain is 2,3,4,5-tetrahydropyridine-2,6-dicarboxylate N-acetyltransferase, found in Clostridium botulinum (strain Eklund 17B / Type B).